The primary structure comprises 682 residues: Protein SYG1 homolog (682 aa).

The SPX domain occupies 1–219 (MKFGKVIEGQ…HTDLQGFWVD (219 aa)). The Cytoplasmic segment spans residues 1–274 (MKFGKVIEGQ…KEHFSANSMR (274 aa)). The helical transmembrane segment at 275-295 (FGLLFGAGLPLAIEAACYYNA) threads the bilayer. Residues 296–300 (TEQSS) are Extracellular-facing. Residues 301-321 (YLLQIWGGFFLVIFAFVLFDL) form a helical membrane-spanning segment. The Cytoplasmic portion of the chain corresponds to 322–348 (DCYVWEKTRVNYMLIFEFNQRKSLNWR). The chain crosses the membrane as a helical span at residues 349-369 (QHLEIVGAVFFIFSLFFFLCM). The Extracellular portion of the chain corresponds to 370–377 (RNFFPGFT). A helical transmembrane segment spans residues 378–398 (IYFPALFLGVVGTFLIAPVIV). Residues 399-406 (PYWRMRRY) lie on the Cytoplasmic side of the membrane. A helical membrane pass occupies residues 407-424 (LIIQLIRVFLSGLSTVHF). The Extracellular segment spans residues 425–426 (QD). The chain crosses the membrane as a helical span at residues 427–447 (FFFADQMVSLTYACGNISLFF). At 448–525 (CLYKRLWRQP…WRIHPGLKYR (78 aa)) the chain is on the cytoplasmic side. The region spanning 459–654 (LCNSSHSPLL…VKPHSDVFVS (196 aa)) is the EXS domain. Residues 526 to 546 (VLYTIFAGVNSLFSYTWDILM) form a helical membrane-spanning segment. Topologically, residues 547–571 (DWNLLVRKDGRWQFREHRILKQLWP) are extracellular. A helical transmembrane segment spans residues 572-592 (YIIAMILNFIVRSSFIFYCIF). Over 593 to 682 (PNHIQHSSGI…QTDVDEAQFS (90 aa)) the chain is Cytoplasmic. The segment at 659 to 682 (SDKNYTDDEDSMDDQTDVDEAQFS) is disordered. Over residues 665 to 682 (DDEDSMDDQTDVDEAQFS) the composition is skewed to acidic residues.

This sequence belongs to the SYG1 (TC 2.A.94) family.

It localises to the cell membrane. May function in G-protein coupled signal transduction. The chain is Protein SYG1 homolog from Schizosaccharomyces pombe (strain 972 / ATCC 24843) (Fission yeast).